A 141-amino-acid polypeptide reads, in one-letter code: Brain ribonuclease (141 aa).

The segment at 1 to 25 is disordered; sequence KETAAAKFRRQHMDSGSSSSSNSNY. 2 residues coordinate substrate: Lys-7 and Arg-10. His-12 functions as the Proton acceptor in the catalytic mechanism. The segment covering 15-24 has biased composition (low complexity); it reads SGSSSSSNSN. 4 disulfide bridges follow: Cys-26-Cys-84, Cys-40-Cys-95, Cys-58-Cys-110, and Cys-65-Cys-72. Residue 41–45 participates in substrate binding; sequence KPVNT. Residue Asn-62 is glycosylated (N-linked (GlcNAc...) asparagine). Positions 66 and 85 each coordinate substrate. His-119 (proton donor) is an active-site residue. Thr-129 carries O-linked (GalNAc...) threonine glycosylation.

It belongs to the pancreatic ribonuclease family.

The protein resides in the secreted. In Giraffa camelopardalis (Giraffe), this protein is Brain ribonuclease (BRN).